A 527-amino-acid polypeptide reads, in one-letter code: Transcription initiation factor TFIID subunit 6b (527 aa).

The Histone-fold domain maps to 3-99; the sequence is TKESIEVIAQ…NLEPTSGSKS (97 aa). Disordered stretches follow at residues 410-442 and 462-492; these read SPPT…THQP and MRGT…PKTS. Composition is skewed to polar residues over residues 416–427 and 462–473; these read VWKTNGKLTSPR and MRGTTTVPQQSH.

The protein belongs to the TAF6 family. Component of the TFIID complex. TFIID is composed of TATA binding protein (TBP) and a number of TBP-associated factors (TAFs) whose MWs range from 14-217 kDa. Interacts with TAF5 and TAF9. Expressed in roots, leaves, inflorescences and siliques.

Its subcellular location is the nucleus. TAFs are components of the transcription factor IID (TFIID) complex that is essential for mediating regulation of RNA polymerase transcription. Not redundant with TAF6. The chain is Transcription initiation factor TFIID subunit 6b (TAF6B) from Arabidopsis thaliana (Mouse-ear cress).